We begin with the raw amino-acid sequence, 315 residues long: 4-hydroxy-3-methylbut-2-enyl diphosphate reductase (315 aa).

C12 provides a ligand contact to [4Fe-4S] cluster. H41 and H74 together coordinate (2E)-4-hydroxy-3-methylbut-2-enyl diphosphate. Positions 41 and 74 each coordinate dimethylallyl diphosphate. H41 and H74 together coordinate isopentenyl diphosphate. A [4Fe-4S] cluster-binding site is contributed by C96. H124 provides a ligand contact to (2E)-4-hydroxy-3-methylbut-2-enyl diphosphate. H124 contributes to the dimethylallyl diphosphate binding site. Position 124 (H124) interacts with isopentenyl diphosphate. The active-site Proton donor is E126. T168 provides a ligand contact to (2E)-4-hydroxy-3-methylbut-2-enyl diphosphate. C198 serves as a coordination point for [4Fe-4S] cluster. (2E)-4-hydroxy-3-methylbut-2-enyl diphosphate-binding residues include S226, S227, N228, and S270. Dimethylallyl diphosphate-binding residues include S226, S227, N228, and S270. Positions 226, 227, 228, and 270 each coordinate isopentenyl diphosphate.

It belongs to the IspH family. [4Fe-4S] cluster serves as cofactor.

The enzyme catalyses isopentenyl diphosphate + 2 oxidized [2Fe-2S]-[ferredoxin] + H2O = (2E)-4-hydroxy-3-methylbut-2-enyl diphosphate + 2 reduced [2Fe-2S]-[ferredoxin] + 2 H(+). The catalysed reaction is dimethylallyl diphosphate + 2 oxidized [2Fe-2S]-[ferredoxin] + H2O = (2E)-4-hydroxy-3-methylbut-2-enyl diphosphate + 2 reduced [2Fe-2S]-[ferredoxin] + 2 H(+). The protein operates within isoprenoid biosynthesis; dimethylallyl diphosphate biosynthesis; dimethylallyl diphosphate from (2E)-4-hydroxy-3-methylbutenyl diphosphate: step 1/1. It participates in isoprenoid biosynthesis; isopentenyl diphosphate biosynthesis via DXP pathway; isopentenyl diphosphate from 1-deoxy-D-xylulose 5-phosphate: step 6/6. Catalyzes the conversion of 1-hydroxy-2-methyl-2-(E)-butenyl 4-diphosphate (HMBPP) into a mixture of isopentenyl diphosphate (IPP) and dimethylallyl diphosphate (DMAPP). Acts in the terminal step of the DOXP/MEP pathway for isoprenoid precursor biosynthesis. This chain is 4-hydroxy-3-methylbut-2-enyl diphosphate reductase, found in Azotobacter vinelandii (strain DJ / ATCC BAA-1303).